A 468-amino-acid polypeptide reads, in one-letter code: Transcription factor ste11 (468 aa).

The segment at methionine 1–asparagine 21 is disordered. The HMG box DNA-binding region spans valine 16–lysine 80. Position 173 is a phosphothreonine (threonine 173). Phosphoserine is present on residues serine 209, serine 211, and serine 218. Composition is skewed to polar residues over residues proline 249 to serine 263 and glycine 274 to proline 285. Residues proline 249–aspartate 290 are disordered.

Post-translationally, phosphorylation results in inactivation.

It localises to the nucleus. It is found in the cytoplasm. Key transcription factor for sexual development. Activates the transcription of the matp, matm, mei2, mfm, ste6 and rgs1 genes. Binds specifically to a DNA fragment carrying a 10-base motif 5'-TTCTTTGTTY-3'. The polypeptide is Transcription factor ste11 (ste11) (Schizosaccharomyces pombe (strain 972 / ATCC 24843) (Fission yeast)).